Here is a 171-residue protein sequence, read N- to C-terminus: MAQINEIIELIAALLIFLGSIIAVISAIGIVKFQDVFLRSHASTKSSTLSVLLTLVGVLIYFTNEQSFFSVRLLLSIVFINLTSPVGMHLVARAAYRTGAYMYRKDDAPSRSSILLSSKEYNSTEELKNRARIREERREKIYYDVQKQRQKEKQQEENIESLSEARRETKD.

3 helical membrane passes run isoleucine 11–valine 31, valine 51–valine 71, and arginine 72–alanine 92. Residues aspartate 144–glutamate 156 are compositionally biased toward basic and acidic residues. The disordered stretch occupies residues aspartate 144–aspartate 171.

This sequence belongs to the CPA3 antiporters (TC 2.A.63) subunit G family. As to quaternary structure, may form a heterooligomeric complex that consists of seven subunits: mnhA2, mnhB2, mnhC2, mnhD2, mnhE2, mnhF2 and mnhG2.

It localises to the cell membrane. The protein is Putative antiporter subunit mnhG2 (mnhG2) of Staphylococcus haemolyticus (strain JCSC1435).